A 661-amino-acid polypeptide reads, in one-letter code: UvrABC system protein B (661 aa).

The Helicase ATP-binding domain maps to Ala25 to Pro414. Gly38–Thr45 is a binding site for ATP. Residues Tyr91–Ile114 carry the Beta-hairpin motif. Residues Gln430–Ile592 form the Helicase C-terminal domain. The UVR domain maps to Lys621 to Ala656.

Belongs to the UvrB family. As to quaternary structure, forms a heterotetramer with UvrA during the search for lesions. Interacts with UvrC in an incision complex.

The protein localises to the cytoplasm. Functionally, the UvrABC repair system catalyzes the recognition and processing of DNA lesions. A damage recognition complex composed of 2 UvrA and 2 UvrB subunits scans DNA for abnormalities. Upon binding of the UvrA(2)B(2) complex to a putative damaged site, the DNA wraps around one UvrB monomer. DNA wrap is dependent on ATP binding by UvrB and probably causes local melting of the DNA helix, facilitating insertion of UvrB beta-hairpin between the DNA strands. Then UvrB probes one DNA strand for the presence of a lesion. If a lesion is found the UvrA subunits dissociate and the UvrB-DNA preincision complex is formed. This complex is subsequently bound by UvrC and the second UvrB is released. If no lesion is found, the DNA wraps around the other UvrB subunit that will check the other stand for damage. This Rickettsia conorii (strain ATCC VR-613 / Malish 7) protein is UvrABC system protein B.